Reading from the N-terminus, the 224-residue chain is Deoxyribose-phosphate aldolase (224 aa).

Residue Asp92 is the Proton donor/acceptor of the active site. Lys155 acts as the Schiff-base intermediate with acetaldehyde in catalysis. The Proton donor/acceptor role is filled by Lys184.

Belongs to the DeoC/FbaB aldolase family. DeoC type 1 subfamily.

The protein resides in the cytoplasm. It catalyses the reaction 2-deoxy-D-ribose 5-phosphate = D-glyceraldehyde 3-phosphate + acetaldehyde. Its pathway is carbohydrate degradation; 2-deoxy-D-ribose 1-phosphate degradation; D-glyceraldehyde 3-phosphate and acetaldehyde from 2-deoxy-alpha-D-ribose 1-phosphate: step 2/2. Functionally, catalyzes a reversible aldol reaction between acetaldehyde and D-glyceraldehyde 3-phosphate to generate 2-deoxy-D-ribose 5-phosphate. The chain is Deoxyribose-phosphate aldolase from Halalkalibacterium halodurans (strain ATCC BAA-125 / DSM 18197 / FERM 7344 / JCM 9153 / C-125) (Bacillus halodurans).